The chain runs to 510 residues: ATP synthase subunit alpha (510 aa).

169–176 is an ATP binding site; that stretch reads GDRQTGKT.

Belongs to the ATPase alpha/beta chains family. As to quaternary structure, F-type ATPases have 2 components, CF(1) - the catalytic core - and CF(0) - the membrane proton channel. CF(1) has five subunits: alpha(3), beta(3), gamma(1), delta(1), epsilon(1). CF(0) has three main subunits: a(1), b(2) and c(9-12). The alpha and beta chains form an alternating ring which encloses part of the gamma chain. CF(1) is attached to CF(0) by a central stalk formed by the gamma and epsilon chains, while a peripheral stalk is formed by the delta and b chains.

It is found in the cell inner membrane. It carries out the reaction ATP + H2O + 4 H(+)(in) = ADP + phosphate + 5 H(+)(out). In terms of biological role, produces ATP from ADP in the presence of a proton gradient across the membrane. The alpha chain is a regulatory subunit. In Anaeromyxobacter sp. (strain K), this protein is ATP synthase subunit alpha.